The chain runs to 518 residues: Probable glycosyltransferase At5g03795 (518 aa).

The Cytoplasmic portion of the chain corresponds to 1–25 (MGDEDVDGKCKNMSACSSTTSYSTK). Residues 26–46 (LFLFMVPLVVISGFVFVNIGP) traverse the membrane as a helical; Signal-anchor for type II membrane protein segment. Residues 47–518 (KDSTSLLTSL…RRLNVKIREV (472 aa)) lie on the Lumenal side of the membrane. N-linked (GlcNAc...) asparagine glycans are attached at residues Asn-104, Asn-113, Asn-120, Asn-282, and Asn-320.

This sequence belongs to the glycosyltransferase 47 family.

Its subcellular location is the golgi apparatus membrane. May be involved in cell wall biosynthesis. This chain is Probable glycosyltransferase At5g03795, found in Arabidopsis thaliana (Mouse-ear cress).